Here is a 149-residue protein sequence, read N- to C-terminus: Transcriptional repressor NrdR (149 aa).

The segment at 3–34 (CPFCSATDTKVIDSRLVAEGHQVRRRRECTEC) is a zinc-finger region. The ATP-cone domain occupies 49-139 (PRVIKRDGSR…VYRAFEDVSE (91 aa)).

Belongs to the NrdR family. Zn(2+) is required as a cofactor.

Its function is as follows. Negatively regulates transcription of bacterial ribonucleotide reductase nrd genes and operons by binding to NrdR-boxes. The polypeptide is Transcriptional repressor NrdR (Shewanella putrefaciens (strain CN-32 / ATCC BAA-453)).